The sequence spans 604 residues: Replication protein E1 (604 aa).

Positions 76–78 (KRK) match the Nuclear localization signal motif. Phosphoserine; by host occurs at positions 81 and 89. Positions 88-97 (LSPRLQSISL) match the Nuclear export signal motif. Residues 144 to 307 (GSGDVDIHYL…TILGHNNAEA (164 aa)) form a DNA-binding region region. The SF3 helicase domain maps to 406–556 (VNFIMFLAAF…FPMKSDDTPQ (151 aa)). ATP is bound at residue 432 to 439 (GPPNSGKS). Lys-513 participates in a covalent cross-link: Glycyl lysine isopeptide (Lys-Gly) (interchain with G-Cter in SUMO). Residues 578-604 (SDQEDEGENGESQRAFQCSAGSANEHL) are disordered. The span at 587-604 (GESQRAFQCSAGSANEHL) shows a compositional bias: polar residues.

The protein belongs to the papillomaviridae E1 protein family. In terms of assembly, can form hexamers. Interacts with E2 protein; this interaction increases E1 DNA binding specificity. Interacts with host DNA polymerase subunit POLA2. Interacts with host single stranded DNA-binding protein RPA1. Interacts with host TOP1; this interaction stimulates the enzymatic activity of TOP1. In terms of processing, phosphorylated. Sumoylated.

The protein resides in the host nucleus. The catalysed reaction is Couples ATP hydrolysis with the unwinding of duplex DNA by translocating in the 3'-5' direction.. The enzyme catalyses ATP + H2O = ADP + phosphate + H(+). Functionally, ATP-dependent DNA 3'-5' helicase required for initiation of viral DNA replication. It forms a complex with the viral E2 protein. The E1-E2 complex binds to the replication origin which contains binding sites for both proteins. During the initial step, a dimer of E1 interacts with a dimer of protein E2 leading to a complex that binds the viral origin of replication with high specificity. Then, a second dimer of E1 displaces the E2 dimer in an ATP-dependent manner to form the E1 tetramer. Following this, two E1 monomers are added to each half of the site, which results in the formation of two E1 trimers on the viral ori. Subsequently, two hexamers will be created. The double hexamer acts as a bi-directional helicase machinery and unwinds the viral DNA and then recruits the host DNA polymerase to start replication. In Homo sapiens (Human), this protein is Replication protein E1.